A 515-amino-acid chain; its full sequence is Protein NRT1/ PTR FAMILY 4.1 (515 aa).

The next 12 helical transmembrane spans lie at 24–44 (GIKA…VFLA), 71–91 (FVGT…SFLT), 93–113 (FAAF…LTLQ), 134–154 (VLFT…GSLP), 168–188 (LISG…FLAV), 204–224 (FTIS…GCPM), 298–318 (FLAL…VAQM), 339–359 (IPVA…LALY), 381–401 (IGYG…VEVK), 413–433 (ISVF…MLTV), 461–481 (AMGF…TGWL), and 492–512 (LFYL…IFWA).

It belongs to the major facilitator superfamily. Proton-dependent oligopeptide transporter (POT/PTR) (TC 2.A.17) family. Expressed in siliques and flowers.

It is found in the membrane. Involved in (+) and (-)-abscisic acid transport (ABA) and in gibberellin import. The chain is Protein NRT1/ PTR FAMILY 4.1 (NPF4.1) from Arabidopsis thaliana (Mouse-ear cress).